A 207-amino-acid chain; its full sequence is Dephospho-CoA kinase (207 aa).

Positions 10-207 (ILGLTGGIGS…FYLTLRGGQS (198 aa)) constitute a DPCK domain. 18 to 23 (GSGKSA) serves as a coordination point for ATP.

The protein belongs to the CoaE family.

It localises to the cytoplasm. It carries out the reaction 3'-dephospho-CoA + ATP = ADP + CoA + H(+). It functions in the pathway cofactor biosynthesis; coenzyme A biosynthesis; CoA from (R)-pantothenate: step 5/5. In terms of biological role, catalyzes the phosphorylation of the 3'-hydroxyl group of dephosphocoenzyme A to form coenzyme A. The protein is Dephospho-CoA kinase of Pseudomonas syringae pv. syringae (strain B728a).